We begin with the raw amino-acid sequence, 121 residues long: Small ribosomal subunit protein uS13 (121 aa).

Residues 92-121 form a disordered region; it reads RKGLPCRGQRTRTNARTRKGPRKAAQSLKK.

The protein belongs to the universal ribosomal protein uS13 family. In terms of assembly, part of the 30S ribosomal subunit. Forms a loose heterodimer with protein S19. Forms two bridges to the 50S subunit in the 70S ribosome.

In terms of biological role, located at the top of the head of the 30S subunit, it contacts several helices of the 16S rRNA. In the 70S ribosome it contacts the 23S rRNA (bridge B1a) and protein L5 of the 50S subunit (bridge B1b), connecting the 2 subunits; these bridges are implicated in subunit movement. Contacts the tRNAs in the A and P-sites. The chain is Small ribosomal subunit protein uS13 from Janthinobacterium sp. (strain Marseille) (Minibacterium massiliensis).